Here is a 177-residue protein sequence, read N- to C-terminus: Outer membrane lipoprotein Blc (177 aa).

A signal peptide spans 1-18; that stretch reads MRILPVVAAVTAAFLVVA. Residue C19 is the site of N-palmitoyl cysteine attachment. C19 carries the S-diacylglycerol cysteine lipid modification.

The protein belongs to the calycin superfamily. Lipocalin family. Homodimer.

It localises to the cell outer membrane. Functionally, involved in the storage or transport of lipids necessary for membrane maintenance under stressful conditions. Displays a binding preference for lysophospholipids. The sequence is that of Outer membrane lipoprotein Blc from Citrobacter freundii.